Reading from the N-terminus, the 669-residue chain is Phosphatidylinositol-3-phosphate phosphatase MTMR1 (669 aa).

N-acetylmethionine is present on Met-1. Residues 1 to 17 are compositionally biased toward low complexity; that stretch reads MDRPVAAAAAASAASCE. Positions 1–55 are disordered; that stretch reads MDRPVAAAAAASAASCEGAGGPGPGPGASWRPSRVAGGASASSRHPSIETLDSPT. 2 positions are modified to phosphoserine: Ser-47 and Ser-53. A GRAM domain is found at 94–165; it reads NKLAQMEEAP…GVISRVEKIG (72 aa). The 376-residue stretch at 230–605 folds into the Myotubularin phosphatase domain; the sequence is GWKVYDPVSE…SHLELWVNYY (376 aa). Asn-355, Asn-380, and Ile-381 together coordinate a 1,2-diacyl-sn-glycero-3-phospho-(1D-myo-inositol-3-phosphate). Catalysis depends on Cys-442, which acts as the Phosphocysteine intermediate. Residues Ser-443, Asp-444, Gly-445, Trp-446, Asp-447, Arg-448, and Arg-488 each contribute to the a 1,2-diacyl-sn-glycero-3-phospho-(1D-myo-inositol-3-phosphate) site. Ser-443 contributes to the phosphate binding site. Gly-445, Trp-446, Asp-447, and Arg-448 together coordinate phosphate. The interval 612–669 is required for dimerization; it reads MRPQMPIHQNLKELLAIKAELQKRVEDLQREMATRTISSSSERGSSPTHSATPVHTSV. The interval 644 to 669 is disordered; that stretch reads ATRTISSSSERGSSPTHSATPVHTSV. Low complexity predominate over residues 649–661; that stretch reads SSSSERGSSPTHS.

It belongs to the protein-tyrosine phosphatase family. Non-receptor class myotubularin subfamily. In terms of assembly, homodimer. Widely expressed. Detected in skeletal muscle, heart, lung, liver and brain.

The protein resides in the cell membrane. It is found in the cytoplasm. The enzyme catalyses a 1,2-diacyl-sn-glycero-3-phospho-(1D-myo-inositol-3-phosphate) + H2O = a 1,2-diacyl-sn-glycero-3-phospho-(1D-myo-inositol) + phosphate. The catalysed reaction is 1,2-dioctanoyl-sn-glycero-3-phospho-(1-D-myo-inositol-3-phosphate) + H2O = 1,2-dioctanoyl-sn-glycero-3-phospho-(1D-myo-inositol) + phosphate. It carries out the reaction a 1,2-diacyl-sn-glycero-3-phospho-(1D-myo-inositol-3,5-bisphosphate) + H2O = a 1,2-diacyl-sn-glycero-3-phospho-(1D-myo-inositol-5-phosphate) + phosphate. Its function is as follows. Lipid phosphatase that specifically dephosphorylates the D-3 position of phosphatidylinositol 3-phosphate, generating phosphatidylinositol. Could also dephosphorylate phosphatidylinositol 3,5-bisphosphate to produce phosphatidylinositol 5-phosphate. This Mus musculus (Mouse) protein is Phosphatidylinositol-3-phosphate phosphatase MTMR1.